We begin with the raw amino-acid sequence, 317 residues long: MYTDPRSIINTYFVKNKKIFIINPIAFKFELNFEKIIQTNSKENIALKTFKGGIISLQLRSNELSKLPQDILKGKLEFYINYVSEEKLKIVYDMMVVKVYTIDLKAINKDEIYLIELKILGSIYRKENIENAFIPIIKNNNTYLFENKANNQKVNLLLKGIDKTIELPFLTKISYSNIKTLNTADIKTNENLNTNTKTTNRMLLNLSTKIYEELVLTNSNQIKTINNKQKILKTLRSFIENENGLGGKIKLIFLERTNFLIKNLNLNDLDFILNDINIIQENSCIRIDITLLEDKIEKKYLNQASNVTPFLKNITLL.

This is an uncharacterized protein from Borreliella burgdorferi (strain ATCC 35210 / DSM 4680 / CIP 102532 / B31) (Borrelia burgdorferi).